The sequence spans 511 residues: 2,3-bisphosphoglycerate-independent phosphoglycerate mutase (511 aa).

Mn(2+)-binding residues include Asp18 and Ser68. Catalysis depends on Ser68, which acts as the Phosphoserine intermediate. Residues His129, 159-160 (RD), Arg191, Lys197, 261-264 (RSDR), and Lys329 contribute to the substrate site. Mn(2+)-binding residues include Asp396, His400, Asp437, His438, and His459. The tract at residues 442–464 (ERMTKQAPDGSVRPYGGHTTNPV) is disordered.

Belongs to the BPG-independent phosphoglycerate mutase family. In terms of assembly, monomer. Mn(2+) serves as cofactor.

It carries out the reaction (2R)-2-phosphoglycerate = (2R)-3-phosphoglycerate. Its pathway is carbohydrate degradation; glycolysis; pyruvate from D-glyceraldehyde 3-phosphate: step 3/5. Functionally, catalyzes the interconversion of 2-phosphoglycerate and 3-phosphoglycerate. The polypeptide is 2,3-bisphosphoglycerate-independent phosphoglycerate mutase (Streptomyces coelicolor (strain ATCC BAA-471 / A3(2) / M145)).